The chain runs to 113 residues: Ribonuclease P protein component (113 aa).

This sequence belongs to the RnpA family. As to quaternary structure, consists of a catalytic RNA component (M1 or rnpB) and a protein subunit.

The catalysed reaction is Endonucleolytic cleavage of RNA, removing 5'-extranucleotides from tRNA precursor.. Its function is as follows. RNaseP catalyzes the removal of the 5'-leader sequence from pre-tRNA to produce the mature 5'-terminus. It can also cleave other RNA substrates such as 4.5S RNA. The protein component plays an auxiliary but essential role in vivo by binding to the 5'-leader sequence and broadening the substrate specificity of the ribozyme. In Finegoldia magna (strain ATCC 29328 / DSM 20472 / WAL 2508) (Peptostreptococcus magnus), this protein is Ribonuclease P protein component.